A 665-amino-acid polypeptide reads, in one-letter code: Probable protein transport Sec1a (665 aa).

A disordered region spans residues 543-594 (PSPSFRGIPSASTQTSPAHQPAQSMRSRRTGGTWARPRDSDDGYSSDSVLKH). Polar residues-rich tracts occupy residues 552 to 567 (SASTQTSPAHQPAQSM) and 585 to 594 (GYSSDSVLKH).

The protein belongs to the STXBP/unc-18/SEC1 family.

Functionally, involved in the vesicle trafficking. Binds syntaxins. This Oryza sativa subsp. japonica (Rice) protein is Probable protein transport Sec1a.